We begin with the raw amino-acid sequence, 768 residues long: Vitamin B12-dependent ribonucleoside-diphosphate reductase (768 aa).

The ATP-cone domain maps to 3 to 97; the sequence is KEVVKRDGTV…LYREKRRAIR (95 aa). Substrate is bound by residues serine 234, 249–250, glycine 278, 432–436, and 579–583; these read AC, NPCGE, and PTGTI. Cysteines 250 and 445 form a disulfide. The active-site Proton acceptor is the asparagine 432. Cysteine 434 acts as the Cysteine radical intermediate in catalysis. Catalysis depends on glutamate 436, which acts as the Proton acceptor.

Belongs to the ribonucleoside diphosphate reductase class-2 family. Monomer. Adenosylcob(III)alamin serves as cofactor.

It catalyses the reaction a 2'-deoxyribonucleoside 5'-diphosphate + [thioredoxin]-disulfide + H2O = a ribonucleoside 5'-diphosphate + [thioredoxin]-dithiol. In terms of biological role, provides the precursors necessary for DNA synthesis. Catalyzes the biosynthesis of deoxyribonucleotides from the corresponding ribonucleotides. The sequence is that of Vitamin B12-dependent ribonucleoside-diphosphate reductase from Thermoplasma acidophilum (strain ATCC 25905 / DSM 1728 / JCM 9062 / NBRC 15155 / AMRC-C165).